Reading from the N-terminus, the 598-residue chain is Aspartate--tRNA(Asp/Asn) ligase (598 aa).

Glu172 serves as a coordination point for L-aspartate. The segment at 196 to 199 (QLFK) is aspartate. Arg218 is a binding site for L-aspartate. Residues 218–220 (RDE) and Gln227 each bind ATP. His455 is an L-aspartate binding site. Glu489 lines the ATP pocket. Arg496 contacts L-aspartate. 541–544 (GLDR) serves as a coordination point for ATP.

Belongs to the class-II aminoacyl-tRNA synthetase family. Type 1 subfamily. In terms of assembly, homodimer.

The protein resides in the cytoplasm. The enzyme catalyses tRNA(Asx) + L-aspartate + ATP = L-aspartyl-tRNA(Asx) + AMP + diphosphate. In terms of biological role, aspartyl-tRNA synthetase with relaxed tRNA specificity since it is able to aspartylate not only its cognate tRNA(Asp) but also tRNA(Asn). Reaction proceeds in two steps: L-aspartate is first activated by ATP to form Asp-AMP and then transferred to the acceptor end of tRNA(Asp/Asn). The sequence is that of Aspartate--tRNA(Asp/Asn) ligase from Burkholderia mallei (strain ATCC 23344).